A 224-amino-acid chain; its full sequence is RNA-free ribonuclease P (224 aa).

This sequence belongs to the HARP family.

It catalyses the reaction Endonucleolytic cleavage of RNA, removing 5'-extranucleotides from tRNA precursor.. In terms of biological role, RNA-free RNase P that catalyzes the removal of the 5'-leader sequence from pre-tRNA to produce the mature 5'-terminus. This chain is RNA-free ribonuclease P, found in Haloarcula marismortui (strain ATCC 43049 / DSM 3752 / JCM 8966 / VKM B-1809) (Halobacterium marismortui).